The primary structure comprises 376 residues: Dual-specificity RNA methyltransferase RlmN (376 aa).

Glu-95 functions as the Proton acceptor in the catalytic mechanism. Residues 101 to 339 (EKERATLCVS…CIVRRPRGDD (239 aa)) enclose the Radical SAM core domain. Cys-108 and Cys-344 form a disulfide bridge. Positions 115, 119, and 122 each coordinate [4Fe-4S] cluster. S-adenosyl-L-methionine contacts are provided by residues 169–170 (GE), Ser-201, 223–225 (SLH), and Asn-301. The active-site S-methylcysteine intermediate is the Cys-344.

This sequence belongs to the radical SAM superfamily. RlmN family. Requires [4Fe-4S] cluster as cofactor.

The protein resides in the cytoplasm. It catalyses the reaction adenosine(2503) in 23S rRNA + 2 reduced [2Fe-2S]-[ferredoxin] + 2 S-adenosyl-L-methionine = 2-methyladenosine(2503) in 23S rRNA + 5'-deoxyadenosine + L-methionine + 2 oxidized [2Fe-2S]-[ferredoxin] + S-adenosyl-L-homocysteine. The enzyme catalyses adenosine(37) in tRNA + 2 reduced [2Fe-2S]-[ferredoxin] + 2 S-adenosyl-L-methionine = 2-methyladenosine(37) in tRNA + 5'-deoxyadenosine + L-methionine + 2 oxidized [2Fe-2S]-[ferredoxin] + S-adenosyl-L-homocysteine. Functionally, specifically methylates position 2 of adenine 2503 in 23S rRNA and position 2 of adenine 37 in tRNAs. m2A2503 modification seems to play a crucial role in the proofreading step occurring at the peptidyl transferase center and thus would serve to optimize ribosomal fidelity. The protein is Dual-specificity RNA methyltransferase RlmN of Pseudoalteromonas translucida (strain TAC 125).